Reading from the N-terminus, the 357-residue chain is Protein RecA (357 aa).

67–74 is a binding site for ATP; it reads GPESSGKT. Residues 333–357 form a disordered region; sequence NELTPATAGNSHDEDAFADEGNEEF. A compositionally biased stretch (acidic residues) spans 348–357; that stretch reads AFADEGNEEF.

Belongs to the RecA family.

The protein resides in the cytoplasm. Functionally, can catalyze the hydrolysis of ATP in the presence of single-stranded DNA, the ATP-dependent uptake of single-stranded DNA by duplex DNA, and the ATP-dependent hybridization of homologous single-stranded DNAs. It interacts with LexA causing its activation and leading to its autocatalytic cleavage. This Pectobacterium carotovorum subsp. carotovorum (strain PC1) protein is Protein RecA.